We begin with the raw amino-acid sequence, 176 residues long: CASP-like protein 5A1 (176 aa).

At 1–45 (MDASHPAVYPVGVPPTAVDPPPRVRMKDYEGMPSTLGGLVLRSGQ) the chain is on the cytoplasmic side. A helical membrane pass occupies residues 46 to 66 (FACAVTALSIMISIPDFSSVT). A topological domain (extracellular) is located at residue alanine 67. Residues 68–88 (FCYLVAAMALQLLWSVSLAVV) traverse the membrane as a helical segment. Topologically, residues 89 to 102 (DGYALLLRRTLHNP) are cytoplasmic. The helical transmembrane segment at 103 to 123 (VLLSLLVIGDWVTSTLSLAAA) threads the bilayer. At 124–151 (CSSAGITVLIDSDLAQCAHNHCGRYEAA) the chain is on the extracellular side. The chain crosses the membrane as a helical span at residues 152–172 (VAMAFLTWFLVSLSFFFSFWL). Topologically, residues 173-176 (LATR) are cytoplasmic.

The protein belongs to the Casparian strip membrane proteins (CASP) family. In terms of assembly, homodimer and heterodimers.

It is found in the cell membrane. This chain is CASP-like protein 5A1, found in Selaginella moellendorffii (Spikemoss).